A 691-amino-acid chain; its full sequence is 1-butanol dehydrogenase (cytochrome c) (691 aa).

The first 38 residues, 1-38, serve as a signal peptide directing secretion; sequence MLTTTFARKREESVPLRKGIQRALLGLSCLVLSTTSFA. Residue Glu84 participates in pyrroloquinoline quinone binding. Residues Cys130 and Cys131 are joined by a disulfide bond. Residues Arg136, Thr181, and 197-198 each bind pyrroloquinoline quinone; that span reads GA. Residues Glu199 and Asp322 each coordinate Ca(2+). Catalysis depends on Asp322, which acts as the Proton acceptor. Residues Lys349, 408–409, and Val558 contribute to the pyrroloquinoline quinone site; that span reads NW. One can recognise a Cytochrome c domain in the interval 605 to 684; that stretch reads DDVAEGTGLY…KIKAFILGTA (80 aa). Cys618, Cys621, His622, and Met661 together coordinate heme c.

This sequence belongs to the bacterial PQQ dehydrogenase family. As to quaternary structure, monomer. It depends on pyrroloquinoline quinone as a cofactor. The cofactor is Ca(2+). Requires heme c as cofactor.

It localises to the periplasm. It catalyses the reaction butan-1-ol + 2 Fe(III)-[cytochrome c] = butanal + 2 Fe(II)-[cytochrome c] + 2 H(+). Dehydrogenase activity is increased by ammonium ions. Functionally, involved in the metabolism of butane. Could be important in the detoxification of 1-butanol. Catalyzes the oxidation of 1-butanol to butyraldehyde. Also able to use 1-propanol, 2-pentanol, propionaldehyde and butyraldehyde as substrates. This is 1-butanol dehydrogenase (cytochrome c) from Thauera butanivorans (strain ATCC 43655 / DSM 2080 / JCM 20651 / CCUG 51053 / NBRC 103042 / IAM 12574 / Bu B1211) (Pseudomonas butanovora).